A 155-amino-acid chain; its full sequence is Cytochrome c-type biogenesis protein CcmE (155 aa).

The Cytoplasmic portion of the chain corresponds to 1-8 (MNPRRKKR). Residues 9 to 29 (LLITSLLAVALSLAVGLVLFA) form a helical; Signal-anchor for type II membrane protein membrane-spanning segment. Topologically, residues 30–155 (LQQNIDLFYT…GMDNFKANNK (126 aa)) are periplasmic. Heme is bound by residues His131 and Tyr135.

Belongs to the CcmE/CycJ family.

It is found in the cell inner membrane. Functionally, heme chaperone required for the biogenesis of c-type cytochromes. Transiently binds heme delivered by CcmC and transfers the heme to apo-cytochromes in a process facilitated by CcmF and CcmH. This is Cytochrome c-type biogenesis protein CcmE from Psychromonas ingrahamii (strain DSM 17664 / CCUG 51855 / 37).